A 151-amino-acid polypeptide reads, in one-letter code: MTQVEVKILDDRIGQSIPLPEYATQGSAGMDLRACLDQPLTIEPGQTQLIGTGIAMYIGDPNYAATILPRSGLGHKHGLVLGNLVGLIDSDYQGELKVSCWNRSNQAYTIEPGDRIAQLVILPVVQAQMSIVEEFHETDRGEGGFGHSGRS.

Substrate contacts are provided by residues 70–72 (RSG), asparagine 83, 87–89 (LID), and lysine 97.

The protein belongs to the dUTPase family. The cofactor is Mg(2+).

It catalyses the reaction dUTP + H2O = dUMP + diphosphate + H(+). The protein operates within pyrimidine metabolism; dUMP biosynthesis; dUMP from dCTP (dUTP route): step 2/2. Functionally, this enzyme is involved in nucleotide metabolism: it produces dUMP, the immediate precursor of thymidine nucleotides and it decreases the intracellular concentration of dUTP so that uracil cannot be incorporated into DNA. In Idiomarina loihiensis (strain ATCC BAA-735 / DSM 15497 / L2-TR), this protein is Deoxyuridine 5'-triphosphate nucleotidohydrolase.